We begin with the raw amino-acid sequence, 111 residues long: uncharacterized protein (111 aa).

The next 4 helical transmembrane spans lie at 3–23 (WVLV…LKHA), 24–44 (DSLL…ILLI), 54–74 (AAYT…GIVL), and 80–100 (AAQM…KLFT).

The protein belongs to the drug/metabolite transporter (DMT) superfamily. Small multidrug resistance (SMR) (TC 2.A.7.1) family.

Its subcellular location is the cell membrane. This is an uncharacterized protein from Bacillus subtilis (strain 168).